A 609-amino-acid chain; its full sequence is Adagio protein 1 (609 aa).

A compositionally biased stretch (low complexity) spans 1 to 17; the sequence is MEWDSGSDLSADDASSL. The disordered stretch occupies residues 1 to 24; it reads MEWDSGSDLSADDASSLADDEEGG. The 83-residue stretch at 32-114 folds into the PAS domain; the sequence is IPYPVGNLLH…SEIRKCIDEG (83 aa). Residue Cys82 is modified to S-4a-FMN cysteine. One can recognise a PAC domain in the interval 118 to 161; the sequence is QGELLNFRKDGSPLMNRLRLTPIYGDDDTITHIIGIQFFIETDI. The F-box domain maps to 195 to 241; sequence CGLFQLSDEVVSMKILSRLTPRDVASVSSVCRRLYVLTKNEDLWRRV. Kelch repeat units lie at residues 292–342, 345–392, 397–445, 450–501, and 516–564; these read SRCN…SSPP, RWGH…SGLA, RSWH…PAAW, RLGH…TGSG, and RLDH…NIPG.

This sequence belongs to the ADAGIO family. In terms of assembly, interacts with NFXL2. Interacts (via N-terminus) with GI and (via Kelch repeats) with ADO3. Component of an E3 ubiquitin ligase SCF(ADO1) complex composed of SKP1A/ASK1 (or SKP1B/ASK2), CUL1, RBX1 and ADO1. Also interacts with SKP1D/ASK4, SKP1K/ASK11, CRY1, PHYB, APRR1 and APRR5, and probably with SKP1N/ASK14 and SKP1S/ASK19. May be ubiquitinated. Degraded in a proteasome-dependent manner. In terms of processing, FMN binds covalently to cysteine after exposure to blue light and is reversed in the dark. In terms of tissue distribution, ubiquitously expressed with higher levels in cotyledons and leaves.

Its subcellular location is the nucleus. The protein resides in the cytoplasm. The protein operates within protein modification; protein ubiquitination. Its function is as follows. Component of an E3 ubiquitin ligase complex that plays a central role in blue light-dependent circadian cycles. Acts as a blue light photoreceptor, due to the presence of FMN, that mediates light-regulated protein degradation of critical clock components by targeting them to the proteasome complex. The SCF(ADO1) E3 ubiquitin ligase complex is involved in the regulation of circadian clock-dependent processes including the transition to flowering time, hypocotyl elongation, cotyledons and leaf movement rhythms. APRR1/TOC1 and APRR5, but not 'GIGANTEA', are proteolytic substrates of this ubiquitin ligase complex. Blue light enhances cooperative stabilization of 'GIGANTEA' and ADO1/ZTL, leading to amplification and sharpening of the expression profile of APRR1/TOC1. ADO1/ZTL interacts with ADO3, preventing the interaction of ADO3 with CDF1. The protein is Adagio protein 1 (ADO1) of Arabidopsis thaliana (Mouse-ear cress).